The primary structure comprises 404 residues: Probable sugar efflux transporter (404 aa).

12 helical membrane passes run 15-35 (VITFALAGFVFNTTEFIPVAL), 51-71 (GLIITVYAWVVSLMSLPFMLL), 85-105 (LVLFILSHLLSVIAWDFWVLV), 109-129 (IGVALTHSIFWAITASLVIRV), 137-157 (QAIGLLAIGCSLAMILGLPLG), 168-188 (ATFAIIALIAIGILCLFYQLL), 209-229 (PLLLGLYALTMIIISAHFTAY), 245-265 (SMATFVLFVFGLSGITASLLF), 276-296 (FILFSMGLLTATLLLLFIASQ), 299-319 (WTMFLLTFFWGIGIAGIGLGL), 333-353 (VAMAIYSGIYNIGIGAGALLG), and 363-383 (AYIGVAGALFAVFGLVLFILV).

It belongs to the major facilitator superfamily. SotB (TC 2.A.1.2) family.

Its subcellular location is the cell inner membrane. Its function is as follows. Involved in the efflux of sugars. The physiological role may be the reduction of the intracellular concentration of toxic sugars or sugar metabolites. The sequence is that of Probable sugar efflux transporter from Pasteurella multocida (strain Pm70).